We begin with the raw amino-acid sequence, 64 residues long: uncharacterized protein (64 aa).

This is an uncharacterized protein from African swine fever virus (strain Badajoz 1971 Vero-adapted) (Ba71V).